Here is a 333-residue protein sequence, read N- to C-terminus: Autoinducer 2 import system permease protein LsrD (333 aa).

The next 10 helical transmembrane spans lie at 7-27 (YGWE…FGIA), 45-65 (ICIG…GIDI), 70-90 (TIGL…PMAA), 91-111 (AIPL…ALIL), 119-139 (VITL…SGIF), 162-182 (LLGL…FWLF), 212-232 (TLYF…IVLV), 240-260 (SDLG…GGAN), 261-281 (IYGG…IGYL), and 288-308 (IGIP…IAVV).

This sequence belongs to the binding-protein-dependent transport system permease family. AraH/RbsC subfamily. The complex is composed of two ATP-binding proteins (LsrA), two transmembrane proteins (LsrC and LsrD) and a solute-binding protein (LsrB).

The protein resides in the cell inner membrane. In terms of biological role, part of the ABC transporter complex LsrABCD involved in autoinducer 2 (AI-2) import. Probably responsible for the translocation of the substrate across the membrane. This chain is Autoinducer 2 import system permease protein LsrD (lsrD), found in Photorhabdus temperata.